We begin with the raw amino-acid sequence, 429 residues long: MQGTLIRHLGKHVDEEVSIQGWLYNKRSSGKIQFLIVRDGTGLVQGVLVKKEAPEIFELAKELTQESAIRLRGIVREEPRSMGGYELTVTGLEIINLAQEYPISHKEHGVDFLMDRRHLWMRTPRQNAILRIRAEIEQAARDFFNQNDFTLVDSPIITPAACEGTTTLFELDYHGEKAYLSQSGQLYNEASAMAVGRMYCFGPTFRAEKSKTRRHLMEFWMIEAEAAFFDFEDNMKLQEEMVYFIVQRVLERRRQDLELLGRDISKLEAIKLPFPRLSYTEAVELLKSKGEAFEWGEDFGAPHETIISENFESPVFIHRYPTEIKAFYMKPDPEDGRVVLGADLIAPEGYGEMIGGGQRIDDLQLLEQRLEEHKLPKEAFEWYLDLRRYGSVPHSGFGLGLERTVAWICKLDHVRETIPYPRMLYRVYP.

Belongs to the class-II aminoacyl-tRNA synthetase family. As to quaternary structure, homodimer.

The protein localises to the cytoplasm. The catalysed reaction is tRNA(Asn) + L-asparagine + ATP = L-asparaginyl-tRNA(Asn) + AMP + diphosphate + H(+). The polypeptide is Asparagine--tRNA ligase (Desulforamulus reducens (strain ATCC BAA-1160 / DSM 100696 / MI-1) (Desulfotomaculum reducens)).